A 106-amino-acid polypeptide reads, in one-letter code: UPF0145 protein PSEEN3024 (106 aa).

It belongs to the UPF0145 family.

The polypeptide is UPF0145 protein PSEEN3024 (Pseudomonas entomophila (strain L48)).